Reading from the N-terminus, the 298-residue chain is MPALDHPLIDQFLDALWLEKGLSDNTRVSYRSDLALFNGWLQEHSVSLPDAGRDLILDHLAWRLDQGYKPRSTARFLSGLRGFFRYLLREKLVAIDPTLQVDMPQLGKPLPKSLSEADVEALLQAPDLGEAIGQRDRAMLEVLYACGLRVTELVSLTLDQVNLRQGVLRVMGKGSKERLVPMGEEAVVWLERYQRDGRAELLNGRPSDVLFPSQRGEQMTRQTFWHRIKHHARVAGIDKPLSPHTLRHAFATHLLNHGADLRVVQMLLGHSDLSTTQIYTHVAKARLQQLHAQHHPRG.

Residues 3-88 enclose the Core-binding (CB) domain; that stretch reads ALDHPLIDQF…GLRGFFRYLL (86 aa). The 184-residue stretch at 109–292 folds into the Tyr recombinase domain; sequence PLPKSLSEAD…AKARLQQLHA (184 aa). Residues R149, K173, H244, R247, and H270 contribute to the active site. The O-(3'-phospho-DNA)-tyrosine intermediate role is filled by Y279.

The protein belongs to the 'phage' integrase family. XerD subfamily. In terms of assembly, forms a cyclic heterotetrameric complex composed of two molecules of XerC and two molecules of XerD.

The protein resides in the cytoplasm. Its function is as follows. Site-specific tyrosine recombinase, which acts by catalyzing the cutting and rejoining of the recombining DNA molecules. The XerC-XerD complex is essential to convert dimers of the bacterial chromosome into monomers to permit their segregation at cell division. It also contributes to the segregational stability of plasmids. The sequence is that of Tyrosine recombinase XerD from Pseudomonas putida (strain ATCC 47054 / DSM 6125 / CFBP 8728 / NCIMB 11950 / KT2440).